The sequence spans 370 residues: Gibberellin 2-beta-dioxygenase 2 (370 aa).

One can recognise a Fe2OG dioxygenase domain in the interval Asp-186–Pro-306. Tyr-196 serves as a coordination point for 2-oxoglutarate. Positions 224, 226, and 287 each coordinate Fe cation. The 2-oxoglutarate site is built by Arg-297 and Ser-299.

Belongs to the iron/ascorbate-dependent oxidoreductase family. GA2OX subfamily. Fe(2+) is required as a cofactor.

It catalyses the reaction gibberellin A1 + 2-oxoglutarate + O2 = gibberellin A8 + succinate + CO2. Its function is as follows. Catalyzes the 2-beta-hydroxylation of several biologically active gibberellins, leading to the homeostatic regulation of their endogenous level. Catabolism of gibberellins (GAs) plays a central role in plant development. This is Gibberellin 2-beta-dioxygenase 2 from Oryza sativa subsp. japonica (Rice).